We begin with the raw amino-acid sequence, 236 residues long: Endonuclease NucS (236 aa).

The protein belongs to the NucS endonuclease family.

It is found in the cytoplasm. Its function is as follows. Cleaves both 3' and 5' ssDNA extremities of branched DNA structures. The protein is Endonuclease NucS of Saccharolobus solfataricus (strain ATCC 35092 / DSM 1617 / JCM 11322 / P2) (Sulfolobus solfataricus).